Consider the following 132-residue polypeptide: Large ribosomal subunit protein uL14 (132 aa).

The protein belongs to the universal ribosomal protein uL14 family. In terms of assembly, part of the 50S ribosomal subunit. Forms a cluster with proteins L3 and L24e, part of which may contact the 16S rRNA in 2 intersubunit bridges.

In terms of biological role, binds to 23S rRNA. Forms part of two intersubunit bridges in the 70S ribosome. The chain is Large ribosomal subunit protein uL14 from Methanococcus maripaludis (strain C5 / ATCC BAA-1333).